The following is a 200-amino-acid chain: Probable GTP-binding protein EngB (200 aa).

An EngB-type G domain is found at 22 to 197; the sequence is DLPEIAFAGR…WQAIQDAVEE (176 aa). GTP contacts are provided by residues 30 to 37, 57 to 61, 78 to 81, 145 to 148, and 176 to 178; these read GRSNVGKS, GRTQL, DLPG, TKCD, and FSA. Mg(2+) contacts are provided by serine 37 and threonine 59.

The protein belongs to the TRAFAC class TrmE-Era-EngA-EngB-Septin-like GTPase superfamily. EngB GTPase family. It depends on Mg(2+) as a cofactor.

Functionally, necessary for normal cell division and for the maintenance of normal septation. This chain is Probable GTP-binding protein EngB, found in Trichlorobacter lovleyi (strain ATCC BAA-1151 / DSM 17278 / SZ) (Geobacter lovleyi).